A 291-amino-acid chain; its full sequence is Methylsterol monooxygenase 1 (291 aa).

A run of 2 helical transmembrane segments spans residues L55–L75 and M100–T120. In terms of domain architecture, Fatty acid hydroxylase spans C145–T274. A Histidine box-1 motif is present at residues H157–H161. Residues H170–H174 carry the Histidine box-2 motif. Residues F199–F219 traverse the membrane as a helical segment. Residues F249–M255 carry the Histidine box-3 motif.

Belongs to the sterol desaturase family. It depends on Fe cation as a cofactor.

Its subcellular location is the endoplasmic reticulum membrane. It carries out the reaction 4,4-dimethyl-5alpha-cholest-7-en-3beta-ol + 6 Fe(II)-[cytochrome b5] + 3 O2 + 5 H(+) = 4alpha-carboxy-4beta-methyl-5alpha-cholest-7-ene-3beta-ol + 6 Fe(III)-[cytochrome b5] + 4 H2O. The protein operates within steroid biosynthesis; zymosterol biosynthesis; zymosterol from lanosterol: step 3/6. Functionally, catalyzes the first step in the removal of the two C-4 methyl groups of 4,4-dimethylzymosterol. The protein is Methylsterol monooxygenase 1 (msmo1) of Danio rerio (Zebrafish).